We begin with the raw amino-acid sequence, 239 residues long: MATDELASKLSRRLQMEDEGGEATEQPGLNGAAAAAAEAPDETAQALGSADDELSAKLLRRADLNQGIGEPQSPSRRVFNPYTEFKEFSRKQIKDMEKMFKQYDAGKDGFIDLMELKLMMEKLGAPQTHLGLKSMIQEVDEDFDSKLSFREFLLIFRKAAAGELQEDSGLHVLARLSEIDVSTEGVKGAKNFFEAKVQAINVSSRFEEEIKAEQEERKKQAEEVKQRKAAFKELQSTFK.

Positions 1 to 51 (MATDELASKLSRRLQMEDEGGEATEQPGLNGAAAAAAEAPDETAQALGSAD) are disordered. Ala2 is modified (N-acetylalanine). The residue at position 11 (Ser11) is a Phosphoserine. The segment covering 32-46 (AAAAAAEAPDETAQA) has biased composition (low complexity). Residues Ser73 and Ser75 each carry the phosphoserine modification. Residue Tyr82 is modified to Phosphotyrosine. 2 EF-hand domains span residues 91–126 (KQIK…LGAP) and 127–162 (QTHL…AAAG). Ca(2+)-binding residues include Asp104, Asp108, Glu115, Asp140, Asp142, Asp144, Lys146, and Glu151. Lys232 carries the N6-acetyllysine modification.

Interacts with CASP9; with inactive form.

The protein resides in the membrane raft. Its function is as follows. May regulate B-cell receptor (BCR)-induced immature and primary B-cell apoptosis. Plays a role as negative regulator of the canonical NF-kappa-B-activating branch. Controls spontaneous apoptosis through the regulation of BCL2L1 abundance. In Rattus norvegicus (Rat), this protein is EF-hand domain-containing protein D2 (Efhd2).